The primary structure comprises 454 residues: tRNA modification GTPase MnmE (454 aa).

(6S)-5-formyl-5,6,7,8-tetrahydrofolate contacts are provided by Arg-23, Glu-80, and Lys-120. In terms of domain architecture, TrmE-type G spans 216 to 377 (GMKVVIAGRP…LRNHLKQSMG (162 aa)). Asn-226 serves as a coordination point for K(+). Residues 226-231 (NAGKSS), 245-251 (TDIAGTT), 270-273 (DTAG), 335-338 (NKAD), and 358-360 (SAR) each bind GTP. Position 230 (Ser-230) interacts with Mg(2+). Thr-245, Ile-247, and Thr-250 together coordinate K(+). Thr-251 lines the Mg(2+) pocket. Lys-454 contacts (6S)-5-formyl-5,6,7,8-tetrahydrofolate.

The protein belongs to the TRAFAC class TrmE-Era-EngA-EngB-Septin-like GTPase superfamily. TrmE GTPase family. In terms of assembly, homodimer. Heterotetramer of two MnmE and two MnmG subunits. It depends on K(+) as a cofactor.

The protein localises to the cytoplasm. Exhibits a very high intrinsic GTPase hydrolysis rate. Involved in the addition of a carboxymethylaminomethyl (cmnm) group at the wobble position (U34) of certain tRNAs, forming tRNA-cmnm(5)s(2)U34. The polypeptide is tRNA modification GTPase MnmE (Escherichia coli (strain SMS-3-5 / SECEC)).